The sequence spans 377 residues: DNA-directed RNA polymerase subunit alpha (377 aa).

An alpha N-terminal domain (alpha-NTD) region spans residues 1–259 (MSDSSHNLLY…KHFSVFEKMD (259 aa)). The tract at residues 276–377 (KDDILHKLVL…KIRSSKNTKG (102 aa)) is alpha C-terminal domain (alpha-CTD).

The protein belongs to the RNA polymerase alpha chain family. Homodimer. The RNAP catalytic core consists of 2 alpha, 1 beta, 1 beta' and 1 omega subunit. When a sigma factor is associated with the core the holoenzyme is formed, which can initiate transcription.

The catalysed reaction is RNA(n) + a ribonucleoside 5'-triphosphate = RNA(n+1) + diphosphate. Its function is as follows. DNA-dependent RNA polymerase catalyzes the transcription of DNA into RNA using the four ribonucleoside triphosphates as substrates. This is DNA-directed RNA polymerase subunit alpha from Chlamydia trachomatis serovar D (strain ATCC VR-885 / DSM 19411 / UW-3/Cx).